The primary structure comprises 118 residues: Large ribosomal subunit protein bL20 (118 aa).

This sequence belongs to the bacterial ribosomal protein bL20 family.

Functionally, binds directly to 23S ribosomal RNA and is necessary for the in vitro assembly process of the 50S ribosomal subunit. It is not involved in the protein synthesizing functions of that subunit. The polypeptide is Large ribosomal subunit protein bL20 (Aeromonas hydrophila subsp. hydrophila (strain ATCC 7966 / DSM 30187 / BCRC 13018 / CCUG 14551 / JCM 1027 / KCTC 2358 / NCIMB 9240 / NCTC 8049)).